We begin with the raw amino-acid sequence, 311 residues long: Methionyl-tRNA formyltransferase (311 aa).

A (6S)-5,6,7,8-tetrahydrofolate-binding site is contributed by 110–113 (SLLP).

The protein belongs to the Fmt family.

The catalysed reaction is L-methionyl-tRNA(fMet) + (6R)-10-formyltetrahydrofolate = N-formyl-L-methionyl-tRNA(fMet) + (6S)-5,6,7,8-tetrahydrofolate + H(+). Attaches a formyl group to the free amino group of methionyl-tRNA(fMet). The formyl group appears to play a dual role in the initiator identity of N-formylmethionyl-tRNA by promoting its recognition by IF2 and preventing the misappropriation of this tRNA by the elongation apparatus. The polypeptide is Methionyl-tRNA formyltransferase (Streptococcus pyogenes serotype M3 (strain ATCC BAA-595 / MGAS315)).